The primary structure comprises 322 residues: Packaging protein 3 (322 aa).

The tract at residues 1–24 is disordered; that stretch reads MHPILKNIRSQPDQGRAEEHNPEL. An interaction with packaging protein 1 region spans residues 1-127; it reads MHPILKNIRS…RDVERWQHDT (127 aa).

The protein belongs to the adenoviridae packaging protein 3 family. As to quaternary structure, part of the genome packaging complex composed of packaging proteins 1, 2 and 3; this complex specifically binds to the packaging sequence on the left end of viral genomic DNA and performs packaging of the viral genome. Interacts with hexon-linking protein IIIa; this interaction is required to promote correct genome packaging. Post-translationally, cleaved at different sites by the viral protease during virion maturation.

It is found in the host nucleus. Involved in viral genome packaging through its interaction with packaging proteins 1 and 2. After proteolytic cleavage by adenovirus protease, L1 52/55k protein is removed from the capsid during viral maturation. The sequence is that of Packaging protein 3 from Pantherophis guttatus (Corn snake).